The following is a 303-amino-acid chain: UDP-3-O-acyl-N-acetylglucosamine deacetylase (303 aa).

Zn(2+)-binding residues include His-78, His-237, and Asp-241. Catalysis depends on His-264, which acts as the Proton donor.

It belongs to the LpxC family. Zn(2+) is required as a cofactor.

It carries out the reaction a UDP-3-O-[(3R)-3-hydroxyacyl]-N-acetyl-alpha-D-glucosamine + H2O = a UDP-3-O-[(3R)-3-hydroxyacyl]-alpha-D-glucosamine + acetate. The protein operates within glycolipid biosynthesis; lipid IV(A) biosynthesis; lipid IV(A) from (3R)-3-hydroxytetradecanoyl-[acyl-carrier-protein] and UDP-N-acetyl-alpha-D-glucosamine: step 2/6. Its function is as follows. Catalyzes the hydrolysis of UDP-3-O-myristoyl-N-acetylglucosamine to form UDP-3-O-myristoylglucosamine and acetate, the committed step in lipid A biosynthesis. This chain is UDP-3-O-acyl-N-acetylglucosamine deacetylase, found in Pseudomonas fluorescens (strain Pf0-1).